A 532-amino-acid chain; its full sequence is 2,3-bisphosphoglycerate-independent phosphoglycerate mutase (532 aa).

The Mn(2+) site is built by Asp15 and Ser65. The active-site Phosphoserine intermediate is Ser65. Residues His126, 156 to 157 (RD), Arg188, Arg194, 258 to 261 (RPDR), and Lys331 contribute to the substrate site. Mn(2+) contacts are provided by Asp398, His402, Asp439, His440, and His457.

Belongs to the BPG-independent phosphoglycerate mutase family. In terms of assembly, monomer. The cofactor is Mn(2+).

It carries out the reaction (2R)-2-phosphoglycerate = (2R)-3-phosphoglycerate. It participates in carbohydrate degradation; glycolysis; pyruvate from D-glyceraldehyde 3-phosphate: step 3/5. Functionally, catalyzes the interconversion of 2-phosphoglycerate and 3-phosphoglycerate. This Microcystis aeruginosa (strain NIES-843 / IAM M-2473) protein is 2,3-bisphosphoglycerate-independent phosphoglycerate mutase.